Reading from the N-terminus, the 519-residue chain is Glutamate--cysteine ligase (519 aa).

This sequence belongs to the glutamate--cysteine ligase type 1 family. Type 1 subfamily.

The enzyme catalyses L-cysteine + L-glutamate + ATP = gamma-L-glutamyl-L-cysteine + ADP + phosphate + H(+). It functions in the pathway sulfur metabolism; glutathione biosynthesis; glutathione from L-cysteine and L-glutamate: step 1/2. This is Glutamate--cysteine ligase from Edwardsiella ictaluri (strain 93-146).